The chain runs to 396 residues: NADH-quinone oxidoreductase subunit D (396 aa).

This sequence belongs to the complex I 49 kDa subunit family. As to quaternary structure, NDH-1 is composed of 14 different subunits. Subunits NuoB, C, D, E, F, and G constitute the peripheral sector of the complex.

The protein resides in the cell inner membrane. It catalyses the reaction a quinone + NADH + 5 H(+)(in) = a quinol + NAD(+) + 4 H(+)(out). Its function is as follows. NDH-1 shuttles electrons from NADH, via FMN and iron-sulfur (Fe-S) centers, to quinones in the respiratory chain. The immediate electron acceptor for the enzyme in this species is believed to be ubiquinone. Couples the redox reaction to proton translocation (for every two electrons transferred, four hydrogen ions are translocated across the cytoplasmic membrane), and thus conserves the redox energy in a proton gradient. This Brucella suis biovar 1 (strain 1330) protein is NADH-quinone oxidoreductase subunit D.